Consider the following 366-residue polypeptide: Major outer membrane protein (366 aa).

A signal peptide spans Met-1–Ala-21.

Belongs to the Gram-negative porin family. As to quaternary structure, homotrimer.

It is found in the cell outer membrane. The polypeptide is Major outer membrane protein (Halomonas elongata (strain ATCC 33173 / DSM 2581 / NBRC 15536 / NCIMB 2198 / 1H9)).